The sequence spans 439 residues: Xylose isomerase (439 aa).

Catalysis depends on residues H101 and D104. Mg(2+)-binding residues include E232, E268, H271, D296, D307, D309, and D339.

Belongs to the xylose isomerase family. Homotetramer. Requires Mg(2+) as cofactor.

The protein resides in the cytoplasm. It carries out the reaction alpha-D-xylose = alpha-D-xylulofuranose. The protein is Xylose isomerase of Yersinia pestis bv. Antiqua (strain Angola).